Reading from the N-terminus, the 143-residue chain is Large ribosomal subunit protein uL16c (143 aa).

It belongs to the universal ribosomal protein uL16 family. In terms of assembly, part of the 50S ribosomal subunit.

Its subcellular location is the plastid. The protein resides in the chloroplast. This is Large ribosomal subunit protein uL16c from Chlorokybus atmophyticus (Soil alga).